A 1157-amino-acid chain; its full sequence is Hephaestin (1157 aa).

The first 23 residues, 1 to 23 (MKAGHLLWALLLMHSLCSLPTDG), serve as a signal peptide directing secretion. 6 consecutive Plastocyanin-like domains span residues 24–206 (AIRN…LITC), 218–366 (QRKD…VDSC), 370–559 (PPVE…LLVC), 569–717 (KQKG…VSQC), 730–902 (ASRV…LVIC), and 910–1066 (NGGR…SHEE). Topologically, residues 24–1109 (AIRNYYLGIQ…PVKNVEILSS (1086 aa)) are extracellular. N-linked (GlcNAc...) asparagine glycans are attached at residues asparagine 49 and asparagine 54. Na(+) contacts are provided by glycine 70 and tyrosine 73. The Cu(2+) site is built by histidine 126 and histidine 128. Histidine 126 is an O2 binding site. Residues lysine 134, aspartate 152, and aspartate 153 each coordinate Ca(2+). Asparagine 164 carries an N-linked (GlcNAc...) asparagine glycan. Cysteine 180 and cysteine 206 are joined by a disulfide. Residues histidine 186 and histidine 188 each coordinate Cu(2+). O2 is bound at residue histidine 186. Asparagine 236 is a glycosylation site (N-linked (GlcNAc...) asparagine). Serine 265 serves as a coordination point for Na(+). Residues cysteine 285 and cysteine 366 are joined by a disulfide bond. The Cu(2+) site is built by histidine 304, cysteine 347, and histidine 352. Tyrosine 416, glycine 425, and tyrosine 428 together coordinate Na(+). Residues cysteine 533 and cysteine 559 are joined by a disulfide bond. An N-linked (GlcNAc...) asparagine glycan is attached at asparagine 587. Residue serine 616 coordinates Na(+). A disulfide bond links cysteine 636 and cysteine 717. Cu(2+)-binding residues include histidine 655, cysteine 698, histidine 703, and methionine 708. N-linked (GlcNAc...) asparagine glycosylation is found at asparagine 713 and asparagine 757. The Na(+) site is built by phenylalanine 768 and glycine 777. Cysteine 876 and cysteine 902 are disulfide-bonded. The N-linked (GlcNAc...) asparagine glycan is linked to asparagine 930. The Cu(2+) site is built by histidine 999, histidine 1002, histidine 1004, histidine 1044, cysteine 1045, histidine 1046, histidine 1050, and methionine 1055. Residues histidine 1002 and histidine 1004 each coordinate O2. Histidine 1046 serves as a coordination point for O2. The helical transmembrane segment at 1110-1130 (ALIAICVVLLLIALALGGVVW) threads the bilayer. Residues 1131–1157 (YQHRQRKLRRNRRSILDDSFKLLSLKQ) are Cytoplasmic-facing. Residues serine 1144, serine 1149, and serine 1154 each carry the phosphoserine modification.

Belongs to the multicopper oxidase family. Part of a complex composed of SLC40A1/ferroportin, TF/transferrin and HEPH/hephaestin that transfers iron from cells to transferrin. The cofactor is Cu cation. In terms of tissue distribution, highly expressed in small intestine and colon.

It is found in the basolateral cell membrane. It carries out the reaction 4 Fe(2+) + O2 + 4 H(+) = 4 Fe(3+) + 2 H2O. Functionally, plasma membrane ferroxidase that mediates the extracellular conversion of ferrous/Fe(2+) iron into its ferric/Fe(3+) form. Couples ferroportin which specifically exports ferrous/Fe(2+) iron from cells to transferrin that only binds and shuttles extracellular ferric/Fe(3+) iron throughout the body. By helping iron transfer from cells to blood mainly contributes to dietary iron absorption by the intestinal epithelium and more generally regulates iron levels in the body. In Rattus norvegicus (Rat), this protein is Hephaestin.